Here is a 348-residue protein sequence, read N- to C-terminus: Rhodopsin (348 aa).

At Thr1–Ala33 the chain is on the extracellular side. N-linked (GlcNAc...) asparagine glycosylation occurs at Asn12. Residues Tyr34–Val58 traverse the membrane as a helical segment. At Thr59–Asn70 the chain is on the cytoplasmic side. The chain crosses the membrane as a helical span at residues Tyr71 to Tyr93. Residues Thr94–Cys107 are Extracellular-facing. Residues Cys107 and Cys184 are joined by a disulfide bond. Residues Asn108–Ile130 form a helical membrane-spanning segment. Residues Glu131 to Trp133 carry the 'Ionic lock' involved in activated form stabilization motif. Residues Glu131 to His149 lie on the Cytoplasmic side of the membrane. Residues Ala150 to Val170 traverse the membrane as a helical segment. Topologically, residues Gly171–Ser199 are extracellular. Asn197 carries an N-linked (GlcNAc...) asparagine glycan. Residues Phe200 to Gly221 form a helical membrane-spanning segment. The Cytoplasmic segment spans residues Arg222–Arg249. A helical transmembrane segment spans residues Met250–Phe271. Topologically, residues Ile272 to Leu283 are extracellular. A helical membrane pass occupies residues Phe284 to Cys305. Position 293 is an N6-(retinylidene)lysine (Lys293). At Met306–Ala348 the chain is on the cytoplasmic side. The S-palmitoyl cysteine moiety is linked to residue Cys320. The segment at Gly327–Ala348 is disordered. Residues Ala332 to Ala348 are compositionally biased toward low complexity.

It belongs to the G-protein coupled receptor 1 family. Opsin subfamily. Phosphorylated on some or all of the serine and threonine residues present in the C-terminal region. In terms of processing, contains one covalently linked retinal chromophore.

Its subcellular location is the membrane. It localises to the cell projection. The protein resides in the cilium. It is found in the photoreceptor outer segment. Its function is as follows. Photoreceptor required for image-forming vision at low light intensity. While most salt water fish species use retinal as chromophore, most freshwater fish use 3-dehydroretinal, or a mixture of retinal and 3-dehydroretinal. Light-induced isomerization of 11-cis to all-trans retinal triggers a conformational change that activates signaling via G-proteins. Subsequent receptor phosphorylation mediates displacement of the bound G-protein alpha subunit by arrestin and terminates signaling. This is Rhodopsin (rho) from Sargocentron microstoma (Smallmouth squirrelfish).